The primary structure comprises 324 residues: Methionyl-tRNA formyltransferase (324 aa).

A (6S)-5,6,7,8-tetrahydrofolate-binding site is contributed by 112-115 (SILP).

This sequence belongs to the Fmt family.

The enzyme catalyses L-methionyl-tRNA(fMet) + (6R)-10-formyltetrahydrofolate = N-formyl-L-methionyl-tRNA(fMet) + (6S)-5,6,7,8-tetrahydrofolate + H(+). Attaches a formyl group to the free amino group of methionyl-tRNA(fMet). The formyl group appears to play a dual role in the initiator identity of N-formylmethionyl-tRNA by promoting its recognition by IF2 and preventing the misappropriation of this tRNA by the elongation apparatus. This Shewanella loihica (strain ATCC BAA-1088 / PV-4) protein is Methionyl-tRNA formyltransferase.